We begin with the raw amino-acid sequence, 137 residues long: Large ribosomal subunit protein uL16 (137 aa).

This sequence belongs to the universal ribosomal protein uL16 family. In terms of assembly, part of the 50S ribosomal subunit.

Binds 23S rRNA and is also seen to make contacts with the A and possibly P site tRNAs. This chain is Large ribosomal subunit protein uL16, found in Streptococcus thermophilus (strain CNRZ 1066).